The sequence spans 234 residues: Leucyl/phenylalanyl-tRNA--protein transferase (234 aa).

Belongs to the L/F-transferase family.

It localises to the cytoplasm. The catalysed reaction is N-terminal L-lysyl-[protein] + L-leucyl-tRNA(Leu) = N-terminal L-leucyl-L-lysyl-[protein] + tRNA(Leu) + H(+). The enzyme catalyses N-terminal L-arginyl-[protein] + L-leucyl-tRNA(Leu) = N-terminal L-leucyl-L-arginyl-[protein] + tRNA(Leu) + H(+). It catalyses the reaction L-phenylalanyl-tRNA(Phe) + an N-terminal L-alpha-aminoacyl-[protein] = an N-terminal L-phenylalanyl-L-alpha-aminoacyl-[protein] + tRNA(Phe). Functionally, functions in the N-end rule pathway of protein degradation where it conjugates Leu, Phe and, less efficiently, Met from aminoacyl-tRNAs to the N-termini of proteins containing an N-terminal arginine or lysine. The polypeptide is Leucyl/phenylalanyl-tRNA--protein transferase (Nitrosomonas eutropha (strain DSM 101675 / C91 / Nm57)).